Reading from the N-terminus, the 34-residue chain is Photosystem II reaction center protein T (34 aa).

A helical membrane pass occupies residues 3–23; sequence ALVYTFLLVGTLGIIFFAIFF.

This sequence belongs to the PsbT family. In terms of assembly, PSII is composed of 1 copy each of membrane proteins PsbA, PsbB, PsbC, PsbD, PsbE, PsbF, PsbH, PsbI, PsbJ, PsbK, PsbL, PsbM, PsbT, PsbY, PsbZ, Psb30/Ycf12, at least 3 peripheral proteins of the oxygen-evolving complex and a large number of cofactors. It forms dimeric complexes.

It localises to the plastid. Its subcellular location is the chloroplast thylakoid membrane. Functionally, found at the monomer-monomer interface of the photosystem II (PS II) dimer, plays a role in assembly and dimerization of PSII. PSII is a light-driven water plastoquinone oxidoreductase, using light energy to abstract electrons from H(2)O, generating a proton gradient subsequently used for ATP formation. The polypeptide is Photosystem II reaction center protein T (Klebsormidium bilatum (Filamentous green alga)).